The primary structure comprises 165 residues: Lipoprotein signal peptidase (165 aa).

3 consecutive transmembrane segments (helical) span residues 6–26 (SSVE…LLII), 68–88 (GKID…LFYF), and 95–115 (ISFL…GNMI). Active-site residues include Asp125 and Asp141. The chain crosses the membrane as a helical span at residues 132–152 (IWSFIFNFADVWINIGVVLII).

It belongs to the peptidase A8 family.

The protein localises to the cell inner membrane. It catalyses the reaction Release of signal peptides from bacterial membrane prolipoproteins. Hydrolyzes -Xaa-Yaa-Zaa-|-(S,diacylglyceryl)Cys-, in which Xaa is hydrophobic (preferably Leu), and Yaa (Ala or Ser) and Zaa (Gly or Ala) have small, neutral side chains.. The protein operates within protein modification; lipoprotein biosynthesis (signal peptide cleavage). Functionally, this protein specifically catalyzes the removal of signal peptides from prolipoproteins. The polypeptide is Lipoprotein signal peptidase (Fusobacterium nucleatum subsp. nucleatum (strain ATCC 25586 / DSM 15643 / BCRC 10681 / CIP 101130 / JCM 8532 / KCTC 2640 / LMG 13131 / VPI 4355)).